Consider the following 2314-residue polypeptide: MLTMSVTLSPLRSQGPDPMATDASPMAINMTPTVEQEEGEGEEAVKAIDAEQQYGKPPPLHTAADWKIVLHLPEIETWLRMTSERVRDLTYSVQQDADSKHVDVHLVQLKDICEDISDHVEQIHALLETEFSLKLLSYSVNVIVDIHAVQLLWHQLRVSVLVLRERILQGLQDANGNYTRQTDILQAFSEETTEGRLDSLTEVDDSGQLTIKCSQDYLSLDCGITAFELSDYSPSEDLLGGLGDMTTSQAKTKSFDSWSYSEMEKEFPELIRSVGLLTVATEPVPSSCGEANEDSSQASLSDDHKGEHGEDGAPVPGQQLDSTVGMSSLDGTLANAAEHPSETAKQDSTSSPQLGAKKTQPGPCEITTPKRSIRDCFNYNEDSPTQPTLPKRGLFLKETQKNERKGSDRKGQVVDLKPELSRSTPSLVDPPDRSKLCLVLQSSYPSSPSAASQSYECLHKVGLGNLENIVRSHIKEISSSLGRLTDCHKEKLRLKKPHKTLAEVSLCRIPKQGGGSGKRSESTGSSAGPSMVSPGAPKATMRPETDSASTASGGLCHQRNRSGQLPVQSKASSSPPCSHSSESSLGSDSIKSPVPLLSKNKSQKSSPPAPCHATQNGQVVEAWYGSDEYLALPSHLKQTEVLALKLESLTKLLPQKPRGETIQDIDDWELSEMNSDSEIYPTYHIKKKHTRLGTVSPSSSSDIASSLGESIESGPLSDILSDEDLCLPLSSVKKFTDEKSERPSSSEKNESHSATRSALIQKLMHDIQHQENYEAIWERIEGFVNKLDEFIQWLNEAMETTENWTPPKAETDSLRLYLETHLSFKLNVDSHCALKEAVEEEGHQLLELVVSHKAGLKDTLRMIASQWKELQRQIKRQHSWILRALDTIKAEILATDVSVEDEEGTGSPKAEVQLCHLETQRDAVEQMSLKLYSEQYTSGSKRKEEFANMSKAHAEGSNGLLDFDSEYQELWDWLIDMESLVMDSHDLMMSEEQQQHLYKRYSVEMSIRHLKKSELLSKVEALKKGGLSLPDDILEKVDSINEKWELLGKTLREKIQDTIAGHSGSGPRDLLSPESGSLVRQLEVRIKELKRWLRDTELFIFNSCLRQEKEGTSAEKQLQYFKSLCREIKQRRRGVASILRLCQHLLDDRDTCNLNADHQPMQLIIVNLERRWEAIVMQAVQWQTRLQKKMGKESETLNVIDPGLMDLNGMSEDALEWDETDISNKLISVHEESNDLDQDPEPMLPAVKLEETHHKDSGYEEEAGDCGGSPYTSNITAPSSPHIYQVYSLHNVELHEDSHTPFLKSSPKFTGTTQPTVLTKSLSKDSSFSSTKSLPDLLGGSGLVRPYSCHSGDLSQNSGSESGIVSEGDNEMPTNSDMSLFSMVDGSPSNPETEHPDPQMGDAANVLEQKFKDNGESIKLSSVSRASVSPVGCVNGKAGDLNSVTKHTADCLGEELQGKHDVFTFYDYSYLQGSKLKLPMIMKQPQSEKAHVEDPLLGGFYFDKKSCKAKHQASESQPDAPPHERILASAPHEMGRSAYKSSDIEKTFTGIQSARQLSLLSRSSSVESLSPGGDLFGLGIFKNGSDSLQRSTSLESWLTSYKSNEDLFSCHSSGDISVSSGSVGELSKRTLDLLNRLENIQSPSEQKIKRSVSDMTLQSSSQKMPFAGQMSLDVASSINEDSPASLTELSSSDELSLCSEDIVLHKNKIPESNASFRKRLNRSVADESDVNVSMIVNVSCTSACTDDEDDSDLLSSSTLTLTEEELCLKDEDDDSSIATDDEIYEESNLMSGLDYIKNELQTWIRPKLSLTREKKRSGVTDEIKVNKDGGGNEKANPSDTLDIEALLNGSIRCLSENNGNGKTPPRTHGSGTKGENKKSTYDVSKDPHVADMENGNIESTPEREREKPQGLPEVSENLASNVKTISESELSEYEAVMDGSEDSSVARKEFCPPNDRHPPQMGPKLQHPENQSGDCKPVQNPCPGLLSEAGVGSRQDSNGLKSLPNDAPSGARKPAGCCLLEQNETEESASISSNASCCNCKPDVFHQKDDEDCSVHDFVKEIIDMASTALKSKSQPESEVAAPTSLTQIKEKVLEHSHRPIHLRKGDFYSYLSLSSHDSDCGEVTNYIDEKSSTPLPPDAVDSGLDDKEDMDCFFEACVEDEPVNEEAGLPGALPNESAIEDGAEQKSEQKTASSPVLSDKTDLVPLSGLSPQKGADDAKEGDDVSHTSQGCAESTEPTTPSGKANAEGRSRMQGVSATPEENAASAKPKIQAFSLNAKQPKGKVAMRYPSPQTLTCKEKLVNFHEDRHSNMHR.

Positions methionine 1–arginine 12 are enriched in polar residues. Disordered stretches follow at residues methionine 1 to proline 25, proline 285 to aspartate 432, serine 505 to alanine 613, and threonine 736 to threonine 755. The span at serine 301–aspartate 311 shows a compositional bias: basic and acidic residues. The segment covering glutamine 319–aspartate 330 has biased composition (polar residues). The span at glutamate 398 to leucine 420 shows a compositional bias: basic and acidic residues. Residues serine 569–serine 592 are compositionally biased toward low complexity. Residues threonine 736 to serine 753 are compositionally biased toward basic and acidic residues. Spectrin repeat units lie at residues glutamine 768–glutamate 847 and isoleucine 1033–aspartate 1148. Serine 1072 carries the post-translational modification Phosphoserine. The tract at residues cysteine 1349–glycine 1401 is disordered. Positions aspartate 1353–glycine 1363 are enriched in polar residues. Serine 1568 and serine 1593 each carry phosphoserine. 2 stretches are compositionally biased toward basic and acidic residues: residues arginine 1816–glycine 1831 and glycine 1874–aspartate 1891. Disordered regions lie at residues arginine 1816–serine 1838, leucine 1854–serine 1926, and serine 1940–arginine 2012. Residues asparagine 1917–serine 1926 are compositionally biased toward polar residues. Residues serine 1944 to proline 1958 are compositionally biased toward basic and acidic residues. The tract at residues isoleucine 2062–glutamine 2075 is PKA-RII subunit binding domain. The tract at residues glutamate 2166 to alanine 2286 is disordered. Basic and acidic residues predominate over residues glycine 2215 to serine 2226. Positions histidine 2227 to glycine 2243 are enriched in polar residues.

In terms of assembly, interacts with RII subunit of PKA, phosphatase 2B (calcineurin) and AKAP79. Interacts with SYNPO2.

Its subcellular location is the sarcoplasmic reticulum. The protein localises to the nucleus membrane. Its function is as follows. Binds to type II regulatory subunits of protein kinase A and anchors/targets them to the nuclear membrane or sarcoplasmic reticulum. May act as an adapter for assembling multiprotein complexes. The polypeptide is A-kinase anchor protein 6 (Akap6) (Rattus norvegicus (Rat)).